Consider the following 1109-residue polypeptide: Carbamoyl phosphate synthase large chain (1109 aa).

Positions 1 to 402 (MPRRTDLTSV…ALQKAMRSID (402 aa)) are carboxyphosphate synthetic domain. 12 residues coordinate ATP: arginine 129, arginine 169, glycine 175, glycine 176, glutamate 208, isoleucine 210, glutamate 215, glycine 241, valine 242, histidine 243, glutamine 285, and glutamate 299. One can recognise an ATP-grasp 1 domain in the interval 133–328 (KGVVERCGAE…IAKIAARLAV (196 aa)). Residues glutamine 285, glutamate 299, and asparagine 301 each contribute to the Mg(2+) site. Glutamine 285, glutamate 299, and asparagine 301 together coordinate Mn(2+). The tract at residues 403–548 (KAGSTFHWRG…YHYSSYDAET (146 aa)) is oligomerization domain. The interval 549 to 956 (EVQPRDRPAV…AFAKSQAAAY (408 aa)) is carbamoyl phosphate synthetic domain. The ATP-grasp 2 domain maps to 678 to 876 (GEVLVAAGLP…LAKAASLLMA (199 aa)). Residues arginine 714, arginine 760, leucine 762, glutamate 767, glycine 792, isoleucine 793, histidine 794, serine 795, glutamine 835, and glutamate 847 each contribute to the ATP site. Positions 835, 847, and 849 each coordinate Mg(2+). Mn(2+) contacts are provided by glutamine 835, glutamate 847, and asparagine 849. In terms of domain architecture, MGS-like spans 957-1102 (GGLPTSGRVF…QEHDAARAAR (146 aa)). Positions 957–1109 (GGLPTSGRVF…AARETEGVHA (153 aa)) are allosteric domain.

This sequence belongs to the CarB family. Composed of two chains; the small (or glutamine) chain promotes the hydrolysis of glutamine to ammonia, which is used by the large (or ammonia) chain to synthesize carbamoyl phosphate. Tetramer of heterodimers (alpha,beta)4. The cofactor is Mg(2+). Mn(2+) serves as cofactor.

The enzyme catalyses hydrogencarbonate + L-glutamine + 2 ATP + H2O = carbamoyl phosphate + L-glutamate + 2 ADP + phosphate + 2 H(+). It carries out the reaction hydrogencarbonate + NH4(+) + 2 ATP = carbamoyl phosphate + 2 ADP + phosphate + 2 H(+). Its pathway is amino-acid biosynthesis; L-arginine biosynthesis; carbamoyl phosphate from bicarbonate: step 1/1. It participates in pyrimidine metabolism; UMP biosynthesis via de novo pathway; (S)-dihydroorotate from bicarbonate: step 1/3. Large subunit of the glutamine-dependent carbamoyl phosphate synthetase (CPSase). CPSase catalyzes the formation of carbamoyl phosphate from the ammonia moiety of glutamine, carbonate, and phosphate donated by ATP, constituting the first step of 2 biosynthetic pathways, one leading to arginine and/or urea and the other to pyrimidine nucleotides. The large subunit (synthetase) binds the substrates ammonia (free or transferred from glutamine from the small subunit), hydrogencarbonate and ATP and carries out an ATP-coupled ligase reaction, activating hydrogencarbonate by forming carboxy phosphate which reacts with ammonia to form carbamoyl phosphate. The sequence is that of Carbamoyl phosphate synthase large chain from Beutenbergia cavernae (strain ATCC BAA-8 / DSM 12333 / CCUG 43141 / JCM 11478 / NBRC 16432 / NCIMB 13614 / HKI 0122).